A 331-amino-acid polypeptide reads, in one-letter code: Undecaprenyl-phosphate 4-deoxy-4-formamido-L-arabinose transferase (331 aa).

2 helical membrane passes run 236 to 256 and 270 to 290; these read LSIVGGGIASFGILFGLFLIL and VFPLFSILFIFIGAQFVGLGL.

This sequence belongs to the glycosyltransferase 2 family.

It localises to the cell inner membrane. It carries out the reaction UDP-4-deoxy-4-formamido-beta-L-arabinose + di-trans,octa-cis-undecaprenyl phosphate = 4-deoxy-4-formamido-alpha-L-arabinopyranosyl di-trans,octa-cis-undecaprenyl phosphate + UDP. It functions in the pathway glycolipid biosynthesis; 4-amino-4-deoxy-alpha-L-arabinose undecaprenyl phosphate biosynthesis; 4-amino-4-deoxy-alpha-L-arabinose undecaprenyl phosphate from UDP-4-deoxy-4-formamido-beta-L-arabinose and undecaprenyl phosphate: step 1/2. The protein operates within bacterial outer membrane biogenesis; lipopolysaccharide biosynthesis. Its function is as follows. Catalyzes the transfer of 4-deoxy-4-formamido-L-arabinose from UDP to undecaprenyl phosphate. The modified arabinose is attached to lipid A and is required for resistance to polymyxin and cationic antimicrobial peptides. In Shewanella sediminis (strain HAW-EB3), this protein is Undecaprenyl-phosphate 4-deoxy-4-formamido-L-arabinose transferase.